A 548-amino-acid chain; its full sequence is Phosphoglucomutase (548 aa).

Catalysis depends on serine 135, which acts as the Phosphoserine intermediate. Mg(2+) contacts are provided by serine 135, aspartate 288, aspartate 290, and aspartate 292.

Belongs to the phosphohexose mutase family. Mg(2+) is required as a cofactor.

It catalyses the reaction alpha-D-glucose 1-phosphate = alpha-D-glucose 6-phosphate. Its pathway is glycolipid metabolism; diglucosyl-diacylglycerol biosynthesis. Catalyzes the interconversion between glucose-6-phosphate and alpha-glucose-1-phosphate. This is the first step in the biosynthesis of diglucosyl-diacylglycerol (Glc2-DAG), i.e. a glycolipid found in the membrane, which is also used as a membrane anchor for lipoteichoic acid (LTA). The protein is Phosphoglucomutase (pgcA) of Staphylococcus haemolyticus (strain JCSC1435).